The chain runs to 189 residues: MFDEQAIKQSVQNMLLAIGEDPEREGLKETPRRVAQMYAELFSGMNQDPAEVLRVGYELGHREMVIIKDIPFYSMCEHHLLPFSGVVHIGYIPNIDGRVVGISKLARVVEIYAKRPQIQERMATQIADAIIDGLKCDGVAVVIEAEHMCMVMRGIKKPGSRVITSALRGSFHKSPAARAEFLSLIQQKH.

The Zn(2+) site is built by cysteine 76, histidine 79, and cysteine 149.

This sequence belongs to the GTP cyclohydrolase I family. In terms of assembly, toroid-shaped homodecamer, composed of two pentamers of five dimers.

It carries out the reaction GTP + H2O = 7,8-dihydroneopterin 3'-triphosphate + formate + H(+). It participates in cofactor biosynthesis; 7,8-dihydroneopterin triphosphate biosynthesis; 7,8-dihydroneopterin triphosphate from GTP: step 1/1. This chain is GTP cyclohydrolase 1, found in Dehalococcoides mccartyi (strain ATCC BAA-2266 / KCTC 15142 / 195) (Dehalococcoides ethenogenes (strain 195)).